A 409-amino-acid chain; its full sequence is MARAKFERTKPHVNVGTIGHVDHGKTTLTAAITMTLAAQGKAQARKYDEIDAAPEEKARGITINTAHVEYETEKRHYAHVDCPGHADYVKNMITGAAQMDGAILVVAATDGAMPQTKEHILLARQVGVPSIVVFLNKVDMVDDEELLELVELELRELLNEYEFPGDEVPIIRGSGLKALEAMTANPKTLRGENEWVDKIYELMDAVDNYIPTPERDVDKPFLMAVEDVFSITGRGTVATGRIERGRIKLNETVELVGLRETRTTTVTGIEMFKKSLEEGIAGDNAGLLLRGLKKEDVERGMVIAKPGSITPHTKFEGEVYVLTEKEGGRKTPFFAGYRPQFYVRTTDVTGTITSFTSDDGSAAEMVMPGDRIKMTVELIQPIAIEQGMRFAIREGGRTIGAGVVSKIIE.

Residues 10 to 214 (KPHVNVGTIG…AVDNYIPTPE (205 aa)) enclose the tr-type G domain. Residues 19–26 (GHVDHGKT) form a G1 region. Residue 19-26 (GHVDHGKT) coordinates GTP. Residue threonine 26 participates in Mg(2+) binding. The interval 60 to 64 (GITIN) is G2. Residues 81–84 (DCPG) are G3. GTP contacts are provided by residues 81–85 (DCPGH) and 136–139 (NKVD). Residues 136–139 (NKVD) form a G4 region. The G5 stretch occupies residues 174–176 (SGL).

This sequence belongs to the TRAFAC class translation factor GTPase superfamily. Classic translation factor GTPase family. EF-Tu/EF-1A subfamily. As to quaternary structure, monomer.

The protein resides in the cytoplasm. The catalysed reaction is GTP + H2O = GDP + phosphate + H(+). Functionally, GTP hydrolase that promotes the GTP-dependent binding of aminoacyl-tRNA to the A-site of ribosomes during protein biosynthesis. The polypeptide is Elongation factor Tu (Thermosynechococcus vestitus (strain NIES-2133 / IAM M-273 / BP-1)).